We begin with the raw amino-acid sequence, 433 residues long: UDP-N-acetylmuramate--L-alanine ligase (433 aa).

108–114 (GAHGKTS) provides a ligand contact to ATP.

Belongs to the MurCDEF family.

It is found in the cytoplasm. The enzyme catalyses UDP-N-acetyl-alpha-D-muramate + L-alanine + ATP = UDP-N-acetyl-alpha-D-muramoyl-L-alanine + ADP + phosphate + H(+). The protein operates within cell wall biogenesis; peptidoglycan biosynthesis. Its function is as follows. Cell wall formation. The sequence is that of UDP-N-acetylmuramate--L-alanine ligase from Anoxybacillus flavithermus (strain DSM 21510 / WK1).